A 187-amino-acid polypeptide reads, in one-letter code: Calmodulin-like protein 1 (187 aa).

At Ala2 the chain carries N-acetylalanine. EF-hand domains lie at 8-43 (EQIG…LGQN), 44-79 (PTEA…KLRD), 81-116 (DSEE…IGER), and 117-152 (LTDE…KKRR). Ca(2+)-binding residues include Asp21, Asp23, Asp25, Ser27, Glu32, Asp57, Asp59, Asn61, Asn63, Glu68, Asp94, Asp96, Asn98, Glu105, Asp130, Asp132, Asp134, Gln136, and Glu141. The interval 153-187 (KRIEEKRDHDGGSRTKSAGPSAAPASKRGQKCVIL) is disordered. Positions 154-165 (RIEEKRDHDGGS) are enriched in basic and acidic residues. Low complexity predominate over residues 169–178 (SAGPSAAPAS). At Cys184 the chain carries Cysteine methyl ester. Cys184 is lipidated: S-farnesyl cysteine. The propeptide at 185-187 (VIL) is removed in mature form.

This sequence belongs to the calmodulin family.

The protein resides in the membrane. Calcium-binding protein that binds and activates CAMK1, a calcium/calmodulin-dependent kinase. This Oryza sativa subsp. japonica (Rice) protein is Calmodulin-like protein 1 (CML1).